A 324-amino-acid chain; its full sequence is NADH-ubiquinone oxidoreductase chain 1 (324 aa).

The next 8 membrane-spanning stretches (helical) occupy residues 3–23 (FILS…SVAF), 77–97 (ISPI…PFFV), 104–124 (LGGL…MVAG), 150–170 (LALI…IYFF), 174–194 (IYMW…TISL), 226–246 (LIFM…CVIF), 250–270 (DVFN…FIWA), and 297–317 (YLLF…WIFF).

This sequence belongs to the complex I subunit 1 family.

The protein resides in the mitochondrion inner membrane. It carries out the reaction a ubiquinone + NADH + 5 H(+)(in) = a ubiquinol + NAD(+) + 4 H(+)(out). Functionally, core subunit of the mitochondrial membrane respiratory chain NADH dehydrogenase (Complex I) that is believed to belong to the minimal assembly required for catalysis. Complex I functions in the transfer of electrons from NADH to the respiratory chain. The immediate electron acceptor for the enzyme is believed to be ubiquinone. This is NADH-ubiquinone oxidoreductase chain 1 (mt:ND1) from Drosophila yakuba (Fruit fly).